The chain runs to 468 residues: UDP-N-acetylmuramoyl-L-alanine--L-glutamate ligase (468 aa).

122–128 (GTKGKST) is a binding site for ATP.

Belongs to the MurCDEF family. MurD2 subfamily.

Its subcellular location is the cytoplasm. The catalysed reaction is UDP-N-acetyl-alpha-D-muramoyl-L-alanine + L-glutamate + ATP = UDP-N-acetyl-alpha-D-muramoyl-L-alanyl-L-glutamate + ADP + phosphate + H(+). The protein operates within cell wall biogenesis; peptidoglycan biosynthesis. Its function is as follows. Cell wall formation. Catalyzes the addition of L-glutamate to the nucleotide precursor UDP-N-acetylmuramoyl-L-alanine. This is UDP-N-acetylmuramoyl-L-alanine--L-glutamate ligase from Xanthomonas axonopodis pv. citri (strain 306).